The primary structure comprises 1092 residues: Electroneutral sodium bicarbonate exchanger 1 (1092 aa).

Disordered regions lie at residues 1-26 (MPAG…VDQG), 55-95 (LGRQ…HDTP), and 243-263 (KKQS…PQSA). Residues 1–478 (MPAGSNEPDG…DYRDALSLQC (478 aa)) lie on the Extracellular side of the membrane. The segment covering 58 to 76 (QSHRHHRTHGQKHRRRGGR) has biased composition (basic residues). The segment covering 243 to 255 (KKQSDPHSMDRDG) has biased composition (basic and acidic residues). Residues 479-499 (LASFLFLYCACMSPVITFGGL) traverse the membrane as a helical segment. The Cytoplasmic segment spans residues 500–507 (LGEATEGR). The helical transmembrane segment at 508–528 (ISAIESLFGASMTGIAYSLFA) threads the bilayer. The Extracellular portion of the chain corresponds to 529 to 565 (GQPLTILGSTGPVLVFEKILFKFCKDYALSYLSLRAC). The chain crosses the membrane as a helical span at residues 566-586 (IGLWTAFLCIVLVATDASSLV). The Cytoplasmic portion of the chain corresponds to 587–595 (CYITRFTEE). The chain crosses the membrane as a helical span at residues 596-616 (AFASLICIIFIYEAIEKLIHL). The Extracellular portion of the chain corresponds to 617–687 (AETYPIHMHS…EFIGSACGHH (71 aa)). 2 disulfide bridges follow: C636-C684 and C638-C672. N-linked (GlcNAc) asparagine glycans are attached at residues N646 and N666. Residues 688-708 (GPYTPDVLFWSCILFFATFIV) traverse the membrane as a helical segment. Residues 709 to 731 (SSTLKTFKTSRYFPTRVRSTVSD) are Cytoplasmic-facing. The helical transmembrane segment at 732–752 (FAVFLTIFTMVILDFLIGVPS) threads the bilayer. Topologically, residues 753–778 (PKLQVPSVFKPTRDDRGWFISPIGPN) are extracellular. A helical membrane pass occupies residues 779–799 (PWWTVIAAIIPALLCTILIFM). The Cytoplasmic segment spans residues 800–824 (DQQITAVIINRKEHKLKKGCGYHLD). A helical transmembrane segment spans residues 825-845 (LLVVAIMLGVCSLMGLPWFVA). The Extracellular segment spans residues 846–881 (ATVLSITHVNSLKLESECSAPGEQPKFLGIREQRVT). A helical transmembrane segment spans residues 882–902 (GLMIFVLMGCSVFMTAVLKFI). Over 903-904 (PM) the chain is Cytoplasmic. A helical membrane pass occupies residues 905–925 (PVLYGVFLYMGVSSLQGIQFF). Residues 926 to 962 (DRLKLFGMPAKHQPDFIYLRHVPLRKVHLFTLVQLTC) lie on the Extracellular side of the membrane. A helical transmembrane segment spans residues 963 to 983 (LVLLWVIKASPAAIVFPMMVL). At 984–1092 (ALVFVRKVMD…GNTKEKSPFN (109 aa)) the chain is on the cytoplasmic side.

The protein belongs to the anion exchanger (TC 2.A.31) family. As to quaternary structure, homodimer. In terms of tissue distribution, expressed in the Purkinje cells and dendrites in the molecular layer of the cerebellum (at protein level). Expressed in the hippocampal neurons (at protein level). Strong expression observed in testis and moderate expression in kidney inner medulla, the submandibular gland, eye, cerebrum and cerebellum.

It localises to the cell membrane. It is found in the apical cell membrane. The protein localises to the basolateral cell membrane. Its subcellular location is the cytoplasmic vesicle. The protein resides in the secretory vesicle. It localises to the synaptic vesicle membrane. The enzyme catalyses 2 hydrogencarbonate(out) + chloride(in) + Na(+)(out) = 2 hydrogencarbonate(in) + chloride(out) + Na(+)(in). Its function is as follows. Mediates electroneutral sodium- and carbonate-dependent chloride-HCO3(-) exchange with a Na(+):HCO3(-) stoichiometry of 2:1. Plays a major role in pH regulation in neurons. Mediates sodium reabsorption in the renal cortical collecting ducts. This is Electroneutral sodium bicarbonate exchanger 1 from Rattus norvegicus (Rat).